Reading from the N-terminus, the 250-residue chain is Urease accessory protein UreD (250 aa).

The protein belongs to the UreD family. As to quaternary structure, ureD, UreF and UreG form a complex that acts as a GTP-hydrolysis-dependent molecular chaperone, activating the urease apoprotein by helping to assemble the nickel containing metallocenter of UreC. The UreE protein probably delivers the nickel.

The protein resides in the cytoplasm. Its function is as follows. Required for maturation of urease via the functional incorporation of the urease nickel metallocenter. This chain is Urease accessory protein UreD, found in Aliarcobacter butzleri (strain RM4018) (Arcobacter butzleri).